Consider the following 269-residue polypeptide: Indole-3-glycerol phosphate synthase (269 aa).

The protein belongs to the TrpC family.

It catalyses the reaction 1-(2-carboxyphenylamino)-1-deoxy-D-ribulose 5-phosphate + H(+) = (1S,2R)-1-C-(indol-3-yl)glycerol 3-phosphate + CO2 + H2O. The protein operates within amino-acid biosynthesis; L-tryptophan biosynthesis; L-tryptophan from chorismate: step 4/5. In Saccharopolyspora erythraea (strain ATCC 11635 / DSM 40517 / JCM 4748 / NBRC 13426 / NCIMB 8594 / NRRL 2338), this protein is Indole-3-glycerol phosphate synthase.